Consider the following 450-residue polypeptide: Transcription factor SCREAM2 (450 aa).

Disordered stretches follow at residues 1–47 (MNSD…NQND), 207–231 (RQSS…YERE), and 244–265 (GLNY…KGMP). A compositionally biased stretch (low complexity) spans 209–220 (SSSSKMCNSESS). Residues 221–230 (SEMRKSSYER) are compositionally biased toward basic and acidic residues. Residues 263-312 (GMPAKNLMAERRRRKKLNDRLYMLRSVVPKISKMDRASILGDAIDYLKEL) enclose the bHLH domain. In terms of domain architecture, ACT spans 378 to 450 (NIHMFCGRRP…LDTAGYAGLV (73 aa)).

Homodimer. Heterodimers with SPCH, MUTE, and FAMA. As to expression, expressed constitutively in roots, leaves, stems, and flowers. Broad expression within stomatal cell lineages of leaf epidermis, except in mature guard-cells.

The protein resides in the nucleus. In terms of biological role, mediates stomatal differentiation in the epidermis probably by controlling successive roles of SPCH, MUTE, and FAMA. Functions as a dimer with SPCH during stomatal initiation. This chain is Transcription factor SCREAM2 (SCRM2), found in Arabidopsis thaliana (Mouse-ear cress).